Here is a 586-residue protein sequence, read N- to C-terminus: Beta-fructofuranosidase, insoluble isoenzyme 3 (586 aa).

Residues 1–26 (MATARARAALVFVALLQMAAVVVVRA) form the signal peptide. Aspartate 61 is a catalytic residue. Residues asparagine 154, asparagine 179, asparagine 341, asparagine 390, and asparagine 479 are each glycosylated (N-linked (GlcNAc...) asparagine).

This sequence belongs to the glycosyl hydrolase 32 family.

It localises to the secreted. The protein localises to the extracellular space. Its subcellular location is the apoplast. It is found in the cell wall. It catalyses the reaction Hydrolysis of terminal non-reducing beta-D-fructofuranoside residues in beta-D-fructofuranosides.. The protein is Beta-fructofuranosidase, insoluble isoenzyme 3 (CIN3) of Oryza sativa subsp. indica (Rice).